Here is a 1614-residue protein sequence, read N- to C-terminus: Chitin synthase csmA (1614 aa).

A disordered region spans residues 1–22 (MAGPAPSGRTPSHAQSSLPSLP). The Myosin motor domain maps to 1 to 788 (MAGPAPSGRT…CWADLAKLGE (788 aa)). The segment covering 9-19 (RTPSHAQSSLP) has biased composition (polar residues). ATP is bound at residue 105-112 (GESGSGKT). The segment at 600–650 (QVSSKPMRMPSMARRKAGPSRLAFDAPEGDDQDEYDSQAGSMSKSSARRKS) is disordered. Acidic residues predominate over residues 626–635 (PEGDDQDEYD). Residues 668–692 (LDIVSKCLNSANLNPYFVFCLKPND) are actin-binding. Transmembrane regions (helical) follow at residues 898-918 (WMAIVYLLTFYIPDFLIKTFG) and 937-957 (LIIWFSCAFAIFFIVAFPGLI). Positions 961–1020 (QHVYSTAELSSHNGKDGHNSFVAIRGIVFNLDKFMPSHYPDIVPEKSLKKYAGTDATGLF) constitute a Cytochrome b5 heme-binding domain. N-linked (GlcNAc...) asparagine glycans are attached at residues Asn-1047 and Asn-1072. The helical transmembrane segment at 1209-1229 (FILAISIFICLIVVFKFLAAL) threads the bilayer. Asn-1572 is a glycosylation site (N-linked (GlcNAc...) asparagine).

It in the N-terminal section; belongs to the TRAFAC class myosin-kinesin ATPase superfamily. Myosin family. This sequence in the C-terminal section; belongs to the chitin synthase family. Class V subfamily.

The protein resides in the cell membrane. It localises to the cell septum. The protein localises to the cell tip. The enzyme catalyses [(1-&gt;4)-N-acetyl-beta-D-glucosaminyl](n) + UDP-N-acetyl-alpha-D-glucosamine = [(1-&gt;4)-N-acetyl-beta-D-glucosaminyl](n+1) + UDP + H(+). Its function is as follows. Polymerizes chitin, a structural polymer of the cell wall and septum, by transferring the sugar moiety of UDP-GlcNAc to the non-reducing end of the growing chitin polymer. Acts as the major chitin synthase in Aspergillus niger involved in cell wall integrity which is principally responsible for chitin synthesis at the lateral cell wall. Plays an important role in septal growth or maintenance. Mediates colony spore formation. In Aspergillus niger (strain ATCC MYA-4892 / CBS 513.88 / FGSC A1513), this protein is Chitin synthase csmA.